Here is an 861-residue protein sequence, read N- to C-terminus: Nuclear cap-binding protein complex subunit 1 (861 aa).

Residues 22–30 (RMPKRQRIP) carry the Nuclear localization signal motif. The MIF4G domain occupies 36–264 (CKEMMPDIRT…LVRVVLPNVK (229 aa)).

It belongs to the NCBP1 family. As to quaternary structure, component of the nuclear cap-binding complex (CBC), a heterodimer composed of STO1/CBC1 and CBC2 that interacts with capped RNAs. The complex interacts strongly with the importin subunit alpha SRP1. The SRP1-CBC trimer also binds to capped RNAs, but formation of the importin alpha/beta heterodimer upon binding of KAP95 to SRP1 in the cytoplasm causes dissociation of CBC from the RNA. The CBC complex is part of the commitment complex 1 (CC1), binding to the cap of pre-mRNA and interacting with U1 snRNP subunits MUD2 and SNU56. The CBC complex is part of the NRD1 complex, composed of CBC2, NAB1, NRD1, SEN1 and STO1/CBC2. The CBC complex also interacts with NPL3 and eIF4G (TIF4631 and TIF4632).

It localises to the nucleus. Its subcellular location is the cytoplasm. The protein resides in the perinuclear region. Its function is as follows. Component of the CBC complex, which binds co-transcriptionally to the 5'-cap of pre-mRNAs and is involved in maturation, export and degradation of nuclear mRNAs. The CBC complex is required for efficient pre-mRNA splicing through efficient commitment complex and spliceosome formation. Together with NPL3, the CBC complex is required for export of mRNAs out of the nucleus. The CBC complex is also involved in nuclear mRNA degradation, probably by directing the mRNAs to the sites of degradation. Affects replication of the positive-strand RNA virus BMV. The polypeptide is Nuclear cap-binding protein complex subunit 1 (STO1) (Saccharomyces cerevisiae (strain ATCC 204508 / S288c) (Baker's yeast)).